We begin with the raw amino-acid sequence, 289 residues long: UPF0761 membrane protein ESA_04062 (289 aa).

Transmembrane regions (helical) follow at residues 44–64 (LLSL…FPMF), 104–124 (VGAL…DSAL), 140–160 (FAVY…SLVI), 183–203 (IFPL…VPTT), 215–235 (LVAA…ITMF), and 244–264 (VLAV…IVLL).

This sequence belongs to the UPF0761 family.

The protein localises to the cell inner membrane. The chain is UPF0761 membrane protein ESA_04062 from Cronobacter sakazakii (strain ATCC BAA-894) (Enterobacter sakazakii).